The following is a 144-amino-acid chain: 3-dehydroquinate dehydratase (144 aa).

The active-site Proton acceptor is the Tyr-22. Residues Asn-73, His-79, and Asp-86 each coordinate substrate. His-99 serves as the catalytic Proton donor. Substrate-binding positions include 100–101 (LS) and Arg-110.

It belongs to the type-II 3-dehydroquinase family. Homododecamer.

The catalysed reaction is 3-dehydroquinate = 3-dehydroshikimate + H2O. It participates in metabolic intermediate biosynthesis; chorismate biosynthesis; chorismate from D-erythrose 4-phosphate and phosphoenolpyruvate: step 3/7. In terms of biological role, catalyzes a trans-dehydration via an enolate intermediate. This Herpetosiphon aurantiacus (strain ATCC 23779 / DSM 785 / 114-95) protein is 3-dehydroquinate dehydratase.